Reading from the N-terminus, the 479-residue chain is UDP-glycosyltransferase 85A8 (479 aa).

UDP-alpha-D-glucose contacts are provided by residues Ser302, 358 to 359, 376 to 384, and 398 to 401; these read WC, HSGWNSTIE, and FAEQ.

The protein belongs to the UDP-glycosyltransferase family.

Its function is as follows. May glycosylate diterpenes or flavonols in leaves. In Stevia rebaudiana (Stevia), this protein is UDP-glycosyltransferase 85A8.